The sequence spans 313 residues: Glutathionyl-hydroquinone reductase PcpF (313 aa).

The active-site Nucleophile is cysteine 53. Glutathione is bound by residues tryptophan 86, 119-122 (RVTI), and 137-138 (ES). The region spanning 161-285 (PAEFRPEIDR…INLRHAKAHY (125 aa)) is the GST C-terminal domain. The active-site Proton donor/acceptor is tyrosine 184.

The protein belongs to the GST superfamily. Xi-class GSH transferase family. As to quaternary structure, homodimer.

It carries out the reaction 2-(glutathione-S-yl)-hydroquinone + glutathione = hydroquinone + glutathione disulfide. Functionally, catalyzes glutathione (GSH)-dependent reduction of glutathionyl-hydroquinones (GS-HQs) to the corresponding hydroquinones. Can act on halogenated substrates such as GS-2,6-dichloro-p-hydroquinone (GS-DiCH) and GS-trichloro-p-hydroquinone (GS-TriCH). Involved in the degradation of pentachlorophenol (PCP), a toxic pollutant. The chain is Glutathionyl-hydroquinone reductase PcpF from Sphingobium chlorophenolicum.